We begin with the raw amino-acid sequence, 198 residues long: DnaJ homolog subfamily C member 12 (198 aa).

Methionine 1 bears the N-acetylmethionine mark. Residues 14-79 form the J domain; sequence DYYALLGCDE…ESRARYDHWR (66 aa). Positions 114-177 are disordered; the sequence is EGSGQTFTSS…GLSDLNCGHL (64 aa). Polar residues predominate over residues 116 to 125; that stretch reads SGQTFTSSVP. The span at 126–156 shows a compositional bias: basic and acidic residues; that stretch reads NKERSEQRETKKGDPDSNPEKMKQKEPKFPE. 3 positions are modified to phosphoserine: serine 160, serine 166, and serine 182.

As to quaternary structure, interacts with HSPA8. Interacts with TPH1. Interacts with TPH2. In terms of tissue distribution, highest levels of expression are detected in kidney, pineal gland, and raphe nuclei in the brain where it localizes to serotonerigic neurons.

Its subcellular location is the cytoplasm. In terms of biological role, probable co-chaperone that participates in the proper folding of biopterin-dependent aromatic amino acid hydroxylases, which include phenylalanine-4-hydroxylase (PAH), tyrosine 3-monooxygenase (TH) and peripheral and neuronal tryptophan hydroxylases (TPH1 and TPH2). The sequence is that of DnaJ homolog subfamily C member 12 (Dnajc12) from Mus musculus (Mouse).